A 239-amino-acid chain; its full sequence is Small ribosomal subunit protein uS2c (239 aa).

Belongs to the universal ribosomal protein uS2 family.

The protein resides in the plastid. Its subcellular location is the organellar chromatophore. The protein is Small ribosomal subunit protein uS2c (rps2) of Paulinella chromatophora.